The primary structure comprises 275 residues: NH(3)-dependent NAD(+) synthetase (275 aa).

Residue 46 to 53 (GISGGQDS) participates in ATP binding. Residue D52 coordinates Mg(2+). Position 140 (R140) interacts with deamido-NAD(+). Residue T160 participates in ATP binding. Mg(2+) is bound at residue E165. Residues K173 and D180 each contribute to the deamido-NAD(+) site. Residues K189 and T211 each contribute to the ATP site. 260 to 261 (HK) serves as a coordination point for deamido-NAD(+).

It belongs to the NAD synthetase family. As to quaternary structure, homodimer.

It carries out the reaction deamido-NAD(+) + NH4(+) + ATP = AMP + diphosphate + NAD(+) + H(+). The protein operates within cofactor biosynthesis; NAD(+) biosynthesis; NAD(+) from deamido-NAD(+) (ammonia route): step 1/1. Functionally, catalyzes the ATP-dependent amidation of deamido-NAD to form NAD. Uses ammonia as a nitrogen source. This chain is NH(3)-dependent NAD(+) synthetase, found in Shigella boydii serotype 4 (strain Sb227).